A 457-amino-acid chain; its full sequence is Transmembrane protein 143 (457 aa).

2 consecutive transmembrane segments (helical) span residues 264–284 (ILNV…GMVV) and 285–305 (LSDL…FMGL). Residue Ser316 is modified to Phosphoserine. A compositionally biased stretch (polar residues) spans 429-439 (LSSPKSAPSDD). The tract at residues 429 to 457 (LSSPKSAPSDDNSLEKPLGPAQPSHLVGN) is disordered.

It localises to the membrane. This chain is Transmembrane protein 143 (TMEM143), found in Bos taurus (Bovine).